Reading from the N-terminus, the 98-residue chain is Beta-2-microglobulin (98 aa).

Residues 4–92 form the Ig-like C1-type domain; that stretch reads PKVQVYSRFP…HETLKEPQVY (89 aa). C24 and C79 are disulfide-bonded.

This sequence belongs to the beta-2-microglobulin family. As to quaternary structure, heterodimer of an alpha chain and a beta chain. Beta-2-microglobulin is the beta-chain of major histocompatibility complex class I molecules.

Its subcellular location is the secreted. In terms of biological role, component of the class I major histocompatibility complex (MHC). Involved in the presentation of peptide antigens to the immune system. The polypeptide is Beta-2-microglobulin (B2M) (Meleagris gallopavo (Wild turkey)).